The primary structure comprises 827 residues: MEPDSKKVKLDIFNFPTTRETRTPEEVAESYAEAVKSHPFYDNVHSVVDFYDSGTIKDGRGQIIGVVLREALPKYAASMASELLTSAAVRTSLRSMMFGGEPPLSGIAGYFDYRGSPVELKSRKTSFTYEHEAAWPAVFPVVDYVSEIYRHVAPERWKAQNDAIPDLVRIHGTPFSTLTINSRFRTASHTDVGDFDAGYSCIACLDGQFKGLALSFDDFGINVLLQPRDVMIFDSHHFHSNTEVELSFSGEDWKRLTCVFYYRAALGEPASYAEYQRRLEKSKTDTRFTPVVHHVRVKENGTSVNRPSPVYPISQSPFWVPMVAHCLQHCASAAQCVHEAMTADGSRLAEMMFGESLSTSDGIPLRGEDEKVKANGDSTPRPLSRLGGFSETNLMVSTAVEKKKYLDSEFLLHCISAQLLDMWKQARARWLELVGKEWAHMLALNPERKDFLWKNQSEMNSAFFDLCEVGKQVMLGLLGKEVALPKEEQAFWIMYAVHLSAACAEELHMPEVAMSLRKLNVKLKDFNFGGTRYFKDMPPEEKKRRMERKQRIEEARRHGMPSGSHEKRANWLTNDSFDYQTEDCVIDYAQHKWVLPALHAKEVTKTVRTGELPTTERVVRVLVVIPDPQSKLENVDCKLEVPDMVGSSSEWERLMSSPAVHRVLSAAQRNLQLPDSVTHGNVQTHFAFHSTLPTDIYDFVVLQHVLSRIPDDAQASAYIRRAAALCSGCLFVVETDVQCRQYYTLKYSIRCSYDTVAPLFFQQLHRVCYGTKTARVRTKGELESLIPTVCCARYKLQGSPLNTTVHVVSPFPSCEVQNLSSALCDRA.

The segment at 62–264 is thymine dioxygenase; that stretch reads QIIGVVLREA…RLTCVFYYRA (203 aa). His-189, Asp-191, and His-239 together coordinate Fe cation. Arg-255 serves as a coordination point for 2-oxoglutarate. Disordered stretches follow at residues 364–383 and 539–568; these read PLRGEDEKVKANGDSTPRPL and PEEKKRRMERKQRIEEARRHGMPSGSHEKR. The interval 392–561 is DNA-binding JBP1 domain; the sequence is TNLMVSTAVE…IEEARRHGMP (170 aa). Residues 539-557 show a composition bias toward basic and acidic residues; sequence PEEKKRRMERKQRIEEARR.

It belongs to the TET family. JBP1 subfamily. Monomer. Binds to DNA as a monomer. It depends on Fe(2+) as a cofactor.

The protein localises to the nucleus. It catalyses the reaction thymine + 2-oxoglutarate + O2 = 5-hydroxymethyluracil + succinate + CO2. Functionally, dioxygenase that catalyzes the first step of DNA base J (beta-d-glucosyl-HOMedU) biosynthesis by converting thymine to 5-hydroxymethyluracil (HOMedU). DNA base J is a hypermodified thymidine residue found in the genome of kinetoplastid parasites, which is localized primarily to repetitive DNA, namely the telomeres, and is implicated in the regulation of antigenic variation. Also specifically binds to base J-containing DNA (J-DNA). Involved in propagation and maintenance of DNA base J synthesis initiated by JBP2 by specifically binding already synthesized DNA base J and propagating J synthesis. Thymine dioxygenase activity and J-DNA-binding are independent functions. The protein is Thymine dioxygenase JBP1 (JBP1) of Leishmania tarentolae (Sauroleishmania tarentolae).